Reading from the N-terminus, the 22-residue chain is MXKAVAVLTGSEGVXGTIFFTQ.

Belongs to the Cu-Zn superoxide dismutase family. Homodimer. The cofactor is Cu cation. Zn(2+) is required as a cofactor.

The protein resides in the cytoplasm. The enzyme catalyses 2 superoxide + 2 H(+) = H2O2 + O2. In terms of biological role, destroys radicals which are normally produced within the cells and which are toxic to biological systems. This Hordeum vulgare (Barley) protein is Superoxide dismutase [Cu-Zn].